Here is a 364-residue protein sequence, read N- to C-terminus: Long-wave-sensitive opsin 1 (364 aa).

The Extracellular segment spans residues M1 to V52. S22 is a glycosylation site (O-linked (GlcNAc) serine). A glycan (N-linked (GlcNAc...) asparagine) is linked at N34. Residues Y53 to A77 traverse the membrane as a helical segment. Over T78 to N89 the chain is Cytoplasmic. Residues W90 to I115 form a helical membrane-spanning segment. Residues Y116 to E129 lie on the Extracellular side of the membrane. An intrachain disulfide couples C126 to C203. Residues G130 to W149 traverse the membrane as a helical segment. Topologically, residues E150–L168 are cytoplasmic. Residues A169–S192 traverse the membrane as a helical segment. The Extracellular segment spans residues R193 to S218. A helical transmembrane segment spans residues Y219 to I246. Residues R247–R268 are Cytoplasmic-facing. Residues M269–A292 form a helical membrane-spanning segment. Residues A293–H300 are Extracellular-facing. The helical transmembrane segment at P301–M325 threads the bilayer. K312 is modified (N6-(retinylidene)lysine). Residues N326 to A364 are Cytoplasmic-facing.

Belongs to the G-protein coupled receptor 1 family. Opsin subfamily. Phosphorylated on some or all of the serine and threonine residues present in the C-terminal region. The three color pigments are found in the cone photoreceptor cells. Expressed in retina.

The protein resides in the membrane. Visual pigments are the light-absorbing molecules that mediate vision. They consist of an apoprotein, opsin, covalently linked to cis-retinal. This chain is Long-wave-sensitive opsin 1 (OPN1LW), found in Felis catus (Cat).